We begin with the raw amino-acid sequence, 348 residues long: Anthranilate phosphoribosyltransferase (348 aa).

Residues glycine 87, 90–91 (GD), threonine 95, 97–100 (NIST), 115–123 (KHGNRSASG), and serine 127 each bind 5-phospho-alpha-D-ribose 1-diphosphate. Glycine 87 lines the anthranilate pocket. Residue serine 99 coordinates Mg(2+). Position 118 (asparagine 118) interacts with anthranilate. Residue arginine 173 participates in anthranilate binding. Positions 232 and 233 each coordinate Mg(2+).

It belongs to the anthranilate phosphoribosyltransferase family. As to quaternary structure, homodimer. Mg(2+) is required as a cofactor.

The enzyme catalyses N-(5-phospho-beta-D-ribosyl)anthranilate + diphosphate = 5-phospho-alpha-D-ribose 1-diphosphate + anthranilate. Its pathway is amino-acid biosynthesis; L-tryptophan biosynthesis; L-tryptophan from chorismate: step 2/5. In terms of biological role, catalyzes the transfer of the phosphoribosyl group of 5-phosphorylribose-1-pyrophosphate (PRPP) to anthranilate to yield N-(5'-phosphoribosyl)-anthranilate (PRA). The chain is Anthranilate phosphoribosyltransferase from Synechococcus sp. (strain CC9311).